We begin with the raw amino-acid sequence, 443 residues long: ATP-dependent protease ATPase subunit HslU (443 aa).

ATP contacts are provided by residues V18 and 60 to 65; that span reads GVGKTE. The tract at residues 139-160 is disordered; the sequence is AKNNWGQPEESGEPSSARQNFR. D256, E321, and R393 together coordinate ATP.

The protein belongs to the ClpX chaperone family. HslU subfamily. A double ring-shaped homohexamer of HslV is capped on each side by a ring-shaped HslU homohexamer. The assembly of the HslU/HslV complex is dependent on binding of ATP.

The protein resides in the cytoplasm. Functionally, ATPase subunit of a proteasome-like degradation complex; this subunit has chaperone activity. The binding of ATP and its subsequent hydrolysis by HslU are essential for unfolding of protein substrates subsequently hydrolyzed by HslV. HslU recognizes the N-terminal part of its protein substrates and unfolds these before they are guided to HslV for hydrolysis. The protein is ATP-dependent protease ATPase subunit HslU of Sodalis glossinidius (strain morsitans).